Consider the following 406-residue polypeptide: Olfactomedin-like protein 3 (406 aa).

A signal peptide spans methionine 1 to glycine 21. Residues glutamine 22–asparagine 101 are a coiled coil. The region spanning aspartate 134–lysine 401 is the Olfactomedin-like domain. Cysteines 135 and 328 form a disulfide. Asparagine 248 carries an N-linked (GlcNAc...) asparagine glycan.

The protein belongs to the OLFML3 family.

It is found in the secreted. Its function is as follows. Secreted scaffold protein that plays an essential role in dorsoventral patterning during early development. Stabilizes axial formation by restricting chordin (CHRD) activity on the dorsal side. Acts by facilitating the association between the tolloid proteases and their substrate chordin (CHRD), leading to enhance chordin (CHRD) degradation. May have matrix-related function involved in placental and embryonic development, or play a similar role in other physiological processes. This chain is Olfactomedin-like protein 3 (OLFML3), found in Bos taurus (Bovine).